The sequence spans 2322 residues: Genome polyprotein (2322 aa).

The 154-residue stretch at 29–182 (MEFTLYNGEK…NPADVLVFVP (154 aa)) folds into the Peptidase C28 domain. Catalysis depends on for leader protease activity residues Cys51, His148, and Asp163. Disordered stretches follow at residues 199-219 (RLRG…SGNT) and 238-262 (QLGD…HTNN). Residue Gly202 is the site of N-myristoyl glycine; by host attachment. Composition is skewed to polar residues over residues 204–219 (GQSS…SGNT) and 238–251 (QLGD…SNEG). Over residues 252–262 (STDTTSTHTNN) the composition is skewed to low complexity. Positions 869–871 (RGD) match the Cell attachment site motif. The SF3 helicase domain maps to 1189-1353 (NVHIANLCKV…DGYKINNKLD (165 aa)). Residue 1217–1224 (GKSGQGKS) coordinates ATP. Residues 1484 to 1504 (FEVVALCLTLLANIVIMLRQA) lie within the membrane without spanning it. The disordered stretch occupies residues 1512–1574 (DDPLDGDVTL…PRAEGPYAGP (63 aa)). A compositionally biased stretch (basic and acidic residues) spans 1539–1553 (FRERSPTEQGTREDA). O-(5'-phospho-RNA)-tyrosine occurs at positions 1571, 1594, and 1618. The Peptidase C3 domain occupies 1642–1838 (APPTDLQKMV…YCSCVSRSML (197 aa)). His1685 acts as the For protease 3C activity; Proton donor/acceptor in catalysis. Active-site for protease 3C activity residues include Asp1723 and Cys1802. The Nuclear localization signal motif lies at 1868 to 1876 (MRKTKLAPT). In terms of domain architecture, RdRp catalytic spans 2086–2204 (KNVWDVDYSA…ASDYDLDFEA (119 aa)).

Belongs to the picornaviruses polyprotein family. As to quaternary structure, interacts with host ISG15. In terms of assembly, interacts (via R-G-D motif) with host ITGAV/ITGB6. Interacts with host MAVS; this interaction inhibits binding of host TRAF3 to MAVS, thereby suppressing interferon-mediated responses. Forms homooligomers. As to quaternary structure, homohexamer. Interacts with host VIM. Interacts with host BECN1. In terms of assembly, interacts with host DCTN3. Interacts with RNA-dependent RNA polymerase; this interaction allows 3B-1 to binds 2 polymerases and act as a primer. It also allows the recruitment of the RNA-dependent RNA polymerase to host membranes. As to quaternary structure, interacts with RNA-dependent RNA polymerase; this interaction allows 3B-2 to act as a primer. In terms of assembly, interacts with RNA-dependent RNA polymerase; this interaction allows 3B-3 to act as a primer. Interacts with 3B-1; this interaction allows 3B-1 to binds 2 polymerases and act as a primer. It also allows the recruitment of the RNA-dependent RNA polymerase to host membranes. Interacts with 3B-2; this interaction allows 3B-2 to act as a primer. Interacts with 3B-3; this interaction allows 3B-3 to act as a primer. Post-translationally, removes six residues from its own C-terminus, generating sLb(pro). In terms of processing, specific enzymatic cleavages in vivo by the viral proteases yield a variety of precursors and mature proteins. The polyprotein seems to be cotranslationally cleaved at the 2A/2B junction by a ribosomal skip from one codon to the next without formation of a peptide bond. This process would release the L-P1-2A peptide from the translational complex. During virion maturation, immature virions are rendered infectious following cleavage of VP0 into VP4 and VP2. This maturation seems to be an autocatalytic event triggered by the presence of RNA in the capsid and is followed by a conformational change of the particle. Post-translationally, myristoylation is required during RNA encapsidation and formation of the mature virus particle. In terms of processing, uridylylated by the polymerase and covalently linked to the 5'-end of genomic RNA. These uridylylated forms act as a nucleotide-peptide primer for the polymerase.

Its subcellular location is the host nucleus. The protein resides in the host cytoplasm. It localises to the virion. It is found in the host endoplasmic reticulum membrane. The protein localises to the host cytoplasmic vesicle membrane. It carries out the reaction Autocatalytically cleaves itself from the polyprotein of the foot-and-mouth disease virus by hydrolysis of a Lys-|-Gly bond, but then cleaves host cell initiation factor eIF-4G at bonds -Gly-|-Arg- and -Lys-|-Arg-.. It catalyses the reaction a ribonucleoside 5'-triphosphate + H2O = a ribonucleoside 5'-diphosphate + phosphate + H(+). The enzyme catalyses RNA(n) + a ribonucleoside 5'-triphosphate = RNA(n+1) + diphosphate. The catalysed reaction is Selective cleavage of Gln-|-Gly bond in the poliovirus polyprotein. In other picornavirus reactions Glu may be substituted for Gln, and Ser or Thr for Gly.. In terms of biological role, autocatalytically cleaves itself from the polyprotein at the L/VP0 junction. Also cleaves the host translation initiation factors EIF4G1 and EIF4G3, in order to shut off the capped cellular mRNA transcription. Plays a role in counteracting host innate antiviral response using diverse mechanisms. Possesses a deubiquitinase activity acting on both 'Lys-48' and 'Lys-63'-linked polyubiquitin chains. In turn, inhibits the ubiquitination and subsequent activation of key signaling molecules of type I IFN response such as host RIGI, TBK1, TRAF3 and TRAF6. Inhibits host NF-kappa-B activity by inducing a decrease in RELA mRNA levels. Cleaves a peptide bond in the C-terminus of host ISG15, resulting in the damaging of this modifier that can no longer be attached to target proteins. Also cleaves host G3BP1 and G3BP2 in order to inhibit cytoplasmic stress granules assembly. Its function is as follows. Lies on the inner surface of the capsid shell. After binding to the host receptor, the capsid undergoes conformational changes. Capsid protein VP4 is released, capsid protein VP1 N-terminus is externalized, and together, they shape a pore in the host membrane through which the viral genome is translocated into the host cell cytoplasm. After genome has been released, the channel shrinks. Functionally, forms an icosahedral capsid of pseudo T=3 symmetry with capsid proteins VP1 and VP3. The capsid is composed of 60 copies of each capsid protein organized in the form of twelve pentamers and encloses the viral positive strand RNA genome. Upon acidifcation in the endosome, dissociates into pentamers. Forms an icosahedral capsid of pseudo T=3 symmetry with capsid proteins VP0 and VP3. The capsid is composed of 60 copies of each capsid protein organized in the form of twelve pentamers and encloses the viral positive strand RNA genome. Upon acidifcation in the endosome, dissociates into pentamers. In terms of biological role, forms an icosahedral capsid of pseudo T=3 symmetry with capsid proteins VP2 and VP3. The capsid is composed of 60 copies of each capsid protein organized in the form of twelve pentamers and encloses the viral positive strand RNA genome. Mediates cell entry by attachment to an integrin receptor, usually host ITGAV/ITGB6. In addition, targets host MAVS to suppress type I IFN pathway. Upon acidifcation in the endosome, dissociates into pentamers. Its function is as follows. Mediates self-processing of the polyprotein by a translational effect termed 'ribosome skipping'. Mechanistically, 2A-mediated cleavage occurs between the C-terminal glycine and the proline of the downstream protein 2B. In the case of foot-and-mouth disease virus, the 2A oligopeptide is post-translationally 'trimmed' from the C-terminus of the upstream protein 1D by 3C proteinase. Functionally, plays an essential role in the virus replication cycle by acting as a viroporin. Creates a pore in the host endoplasmic reticulum and as a consequence releases Ca2+ in the cytoplasm of infected cell. In turn, high levels of cytoplasmic calcium may trigger membrane trafficking and transport of viral ER-associated proteins to viroplasms, sites of viral genome replication. Associates with and induces structural rearrangements of intracellular membranes. Triggers host autophagy by interacting with host BECN1 and thereby promotes viral replication. Participates in viral replication and interacts with host DHX9. Displays RNA-binding, nucleotide binding and NTPase activities. May play a role in virion morphogenesis and viral RNA encapsidation by interacting with the capsid protein VP3. In terms of biological role, plays important roles in virus replication, virulence and host range. Cooperates with host DDX56 to inhibit IRF3 nuclear translocation and subsequent type I interferon production. Its function is as follows. Covalently linked to the 5'-end of both the positive-strand and negative-strand genomic RNAs. Acts as a genome-linked replication primer. Functionally, cysteine protease that generates mature viral proteins from the precursor polyprotein. In addition to its proteolytic activity, binds to viral RNA and thus influences viral genome replication. RNA and substrate bind cooperatively to the protease. RNA-directed RNA polymerase 3D-POL replicates genomic and antigenomic RNA by recognizing replications specific signals. Covalently attaches UMP to a tyrosine of VPg, which is used to prime RNA synthesis. The positive stranded RNA genome is first replicated at virus induced membranous vesicles, creating a dsRNA genomic replication form. This dsRNA is then used as template to synthesize positive stranded RNA genomes. ss(+)RNA genomes are either translated, replicated or encapsidated. The sequence is that of Genome polyprotein from Foot-and-mouth disease virus (isolate Swine/Taiwan/OTai/1997 serotype O) (FMDV).